Consider the following 347-residue polypeptide: Endophilin-A3 (347 aa).

A membrane-binding amphipathic helix region spans residues 1-21 (MSVAGLKKQFHKASQLFSEKI). The region spanning 18 to 249 (SEKISGAEGT…LELRISLASK (232 aa)) is the BAR domain. The required for dimerization upon membrane association stretch occupies residues 60–87 (PNPAYRAKLGMLNTVSKLRGQVKATGYP). A coiled-coil region spans residues 180-201 (EEEIRQAVEKFEESKELAERSM). The segment at 218 to 254 (FVEAALDYHRQSTEILQELQSKLELRISLASKVPKRE) is interaction with ARC. The disordered stretch occupies residues 255–288 (FMPKPVNMSSTDANGVGPSSSSKTPGTDTPADQP). Positions 261-281 (NMSSTDANGVGPSSSSKTPGT) are enriched in polar residues. One can recognise an SH3 domain in the interval 285–344 (ADQPCCRGLYDFEPENEGELGFKEGDIITLTNQIDENWYEGMLRGESGFFPINYVEVIVP).

It belongs to the endophilin family. As to quaternary structure, interacts with ARC, DNM1, SGIP1, SYNJ1 and DYDC1. Interacts with FASLG. Interacts with ATXN2. Interacts with BIN2.

The protein localises to the cytoplasm. The protein resides in the early endosome membrane. In terms of biological role, implicated in endocytosis. May recruit other proteins to membranes with high curvature. The sequence is that of Endophilin-A3 (Sh3gl3) from Mus musculus (Mouse).